Consider the following 550-residue polypeptide: Lariat debranching enzyme (550 aa).

A divalent metal cation-binding residues include Cys8 and His10. Ser28 bears the Phosphoserine mark. A divalent metal cation contacts are provided by Asp39 and Asn84. A lariat recognition loop region spans residues 124–154 (SGIFKSHDYRKGHFECPPYNSSTIRSIYHVR). Position 128 is an N6-acetyllysine (Lys128). His174, His226, and His228 together coordinate a divalent metal cation. The segment at 390-550 (EHHQCGEYEQ…AVDDGDASAE (161 aa)) is disordered. Polar residues predominate over residues 416-426 (NTDTSALSSIN). Positions 430-445 (IMLDEEEEEEEEEEEA) are enriched in acidic residues. The span at 450-483 (SDMNTPSVEPASDQASDLSTSFSDIRNLPSSMFV) shows a compositional bias: polar residues. Ser470, Ser480, Ser484, Ser485, Ser489, Ser491, Ser494, Ser505, and Ser520 each carry phosphoserine. A compositionally biased stretch (basic and acidic residues) spans 498 to 528 (KCGETVESGDEKDLAKFPLKRLSDEHEPEQR).

The protein belongs to the lariat debranching enzyme family. It depends on Fe(2+) as a cofactor. The cofactor is Zn(2+). Mn(2+) serves as cofactor.

Its subcellular location is the nucleus. Active in presence of diverse metals including Fe(2+), Zn(2+), Mn(2+). Also activated by Ca(2+). Binds two metal cations in two adjacent alpha and beta metal-binding pockets. Cleaves the 2'-5' phosphodiester linkage at the branch point of excised lariat intron RNA and converts them into linear molecules that can be subsequently degraded, thereby facilitating ribonucleotide turnover. Linked to its role in pre-mRNA processing mechanism, may also participate in retrovirus replication and have an antiviral cell-intrinsic defense function. The protein is Lariat debranching enzyme (Dbr1) of Mus musculus (Mouse).